The primary structure comprises 24 residues: Cryptonin (24 aa).

In terms of biological role, antimicrobial peptide, active against the Gram-negative bacterium E.coli K12-594 (MIC=3.12 ug/ml), the Gram-positive bacteria B.subtilis KCTC 3086 (MIC=3.12 ug/ml), S.aureus KCTC 1928 (MIC=25 ug/ml) and M.luteus KCTC 3063 (MIC=1.56 ug/ml), the antibiotic resistant bacteria methicillin-resistant S.aureus (MRSA) (MIC=25 ug/ml) and vancomycin-resistant Enterococci (VRE) (MIC=25 ug/ml), and the fungi C.albicans KCTC 7965 (MIC=50 ug/ml) and C.tropicalis KCTC 1925 (MIC=3.12 ug/ml). Has very low hemolytic activity on rat erythrocytes. This is Cryptonin from Cryptotympana dubia (Korean horse cicada).